The chain runs to 159 residues: Putative 4-hydroxy-4-methyl-2-oxoglutarate aldolase (159 aa).

Substrate contacts are provided by residues Gly74–Leu77 and Arg96. Asp97 serves as a coordination point for a divalent metal cation.

The protein belongs to the class II aldolase/RraA-like family. Homotrimer. A divalent metal cation is required as a cofactor.

The enzyme catalyses 4-hydroxy-4-methyl-2-oxoglutarate = 2 pyruvate. The catalysed reaction is oxaloacetate + H(+) = pyruvate + CO2. Catalyzes the aldol cleavage of 4-hydroxy-4-methyl-2-oxoglutarate (HMG) into 2 molecules of pyruvate. Also contains a secondary oxaloacetate (OAA) decarboxylase activity due to the common pyruvate enolate transition state formed following C-C bond cleavage in the retro-aldol and decarboxylation reactions. The sequence is that of Putative 4-hydroxy-4-methyl-2-oxoglutarate aldolase from Bacillus anthracis.